The following is a 2873-amino-acid chain: WD repeat-containing protein 87 (2873 aa).

7 WD repeats span residues 108–146 (PCRF…TGLQ), 199–239 (TSSG…PLHS), 242–283 (AHQS…RRLE), 368–407 (SILD…CPAK), 415–460 (NSQD…RLEK), 516–553 (LSSC…SSGS), and 565–604 (LHLC…IGIL). Disordered stretches follow at residues 1049-1124 (FSLD…ESGT), 1177-1199 (DKRD…GKEA), 1392-1413 (EKKT…ERKV), 1531-1607 (SKSK…QEER), and 2199-2338 (KRKE…EEVD). Composition is skewed to basic residues over residues 1089-1101 (VKKH…RGLK) and 1187-1197 (KLKKKHKKKGK). Positions 1549–1574 (EVSREGEEKEQQVTEEQRHIQEEHKW) are enriched in basic and acidic residues. Basic residues predominate over residues 1575–1586 (ARIHRKRARAEK). Basic and acidic residues-rich tracts occupy residues 1587-1607 (KRAQ…QEER) and 2204-2213 (KRGDKPKEKF). Acidic residues predominate over residues 2244–2276 (SSEEEEEREEEEEREEEEEREEEEERKEEEEGE). Residues 2277 to 2287 (EKQVEKEEEEK) are compositionally biased toward basic and acidic residues. A compositionally biased stretch (acidic residues) spans 2304–2337 (EVFEEKEEIMSEEETESLSDEEEEEESCSLEEEV).

In Homo sapiens (Human), this protein is WD repeat-containing protein 87 (WDR87).